The following is a 327-amino-acid chain: GMP reductase (327 aa).

Residue Cys176 is the Thioimidate intermediate of the active site. Residue 205-228 (IIADGGIRTHGDIAKSIRFGASMV) participates in NADP(+) binding.

It belongs to the IMPDH/GMPR family. GuaC type 2 subfamily.

It catalyses the reaction IMP + NH4(+) + NADP(+) = GMP + NADPH + 2 H(+). Catalyzes the irreversible NADPH-dependent deamination of GMP to IMP. It functions in the conversion of nucleobase, nucleoside and nucleotide derivatives of G to A nucleotides, and in maintaining the intracellular balance of A and G nucleotides. The sequence is that of GMP reductase from Streptococcus suis (strain 98HAH33).